We begin with the raw amino-acid sequence, 85 residues long: Granaticin polyketide synthase acyl carrier protein (85 aa).

The Carrier domain maps to Arg-3–Gln-81. O-(pantetheine 4'-phosphoryl)serine is present on Ser-41.

4'-phosphopantetheine is transferred from CoA to a specific serine of the apo-ACP-like protein.

The protein operates within antibiotic biosynthesis; granaticin biosynthesis. In terms of biological role, acyl carrier protein. This Streptomyces violaceoruber protein is Granaticin polyketide synthase acyl carrier protein.